A 431-amino-acid chain; its full sequence is Adenylosuccinate synthetase (431 aa).

GTP is bound by residues 13-19 and 41-43; these read GDEGKGK and GHT. Asp-14 (proton acceptor) is an active-site residue. Asp-14 and Gly-41 together coordinate Mg(2+). IMP-binding positions include 14 to 17, 39 to 42, Thr-130, Arg-144, Gln-225, Thr-240, and Arg-304; these read DEGK and NAGH. His-42 acts as the Proton donor in catalysis. 300–306 contacts substrate; sequence SVTGRPR. Residues Arg-306, 332–334, and 414–416 contribute to the GTP site; these read KLD and STG.

It belongs to the adenylosuccinate synthetase family. Homodimer. Mg(2+) is required as a cofactor.

The protein resides in the cytoplasm. The catalysed reaction is IMP + L-aspartate + GTP = N(6)-(1,2-dicarboxyethyl)-AMP + GDP + phosphate + 2 H(+). It functions in the pathway purine metabolism; AMP biosynthesis via de novo pathway; AMP from IMP: step 1/2. Functionally, plays an important role in the de novo pathway of purine nucleotide biosynthesis. Catalyzes the first committed step in the biosynthesis of AMP from IMP. This Bordetella avium (strain 197N) protein is Adenylosuccinate synthetase.